The following is a 108-amino-acid chain: UPF0102 protein Sama_3355 (108 aa).

Belongs to the UPF0102 family.

This Shewanella amazonensis (strain ATCC BAA-1098 / SB2B) protein is UPF0102 protein Sama_3355.